The following is a 291-amino-acid chain: G1/S-specific cyclin-D1 (291 aa).

Residue T282 is modified to Phosphothreonine.

Belongs to the cyclin family. Cyclin D subfamily. As to quaternary structure, interacts with the cdk4 and cdk6 protein kinases to form a serine/threonine kinase holoenzyme complex. The cyclin subunit imparts substrate specificity to the complex. Post-translationally, phosphorylation at Thr-282 by MAP kinases is required for ubiquitination and degradation by the DCX(AMBRA1) complex. Ubiquitinated by the DCX(AMBRA1) complex during the transition from G1 to S cell phase, leading to its degradation. The DCX(AMBRA1) complex represents the major regulator of CCND1 stability during the G1/S transition.

The protein resides in the nucleus. It is found in the cytoplasm. In terms of biological role, regulatory component of the cyclin D1-CDK4 (DC) complex that phosphorylates and inhibits members of the retinoblastoma (RB) protein family including RB1 and regulates the cell-cycle during G(1)/S transition. Phosphorylation of RB1 allows dissociation of the transcription factor E2F from the RB/E2F complex and the subsequent transcription of E2F target genes which are responsible for the progression through the G(1) phase. Hypophosphorylates RB1 in early G(1) phase. Cyclin D-CDK4 complexes are major integrators of various mitogenenic and antimitogenic signals. The chain is G1/S-specific cyclin-D1 (ccnd1) from Xenopus laevis (African clawed frog).